Reading from the N-terminus, the 476-residue chain is Protein DETOXIFICATION 17 (476 aa).

12 helical membrane passes run 29 to 51 (LWLS…ISVM), 70 to 90 (FASV…ETLC), 111 to 131 (FVLL…EQIL), 140 to 160 (IASV…AYGL), 177 to 197 (VFVC…LFVL), 205 to 225 (GAAL…SCYV), 252 to 272 (IAFP…LLVL), 286 to 306 (VLSI…GLGG), 326 to 346 (LAVY…VTVL), 363 to 383 (IIAY…LDGL), 405 to 425 (LGSY…HFHI), and 431 to 451 (WLGI…VTIF).

The protein belongs to the multi antimicrobial extrusion (MATE) (TC 2.A.66.1) family.

It localises to the membrane. In Arabidopsis thaliana (Mouse-ear cress), this protein is Protein DETOXIFICATION 17.